A 325-amino-acid polypeptide reads, in one-letter code: GMP reductase (325 aa).

The active-site Thioimidate intermediate is cysteine 174. 203-226 (LIADGGIRTHGDIAKSIRFGASMV) contributes to the NADP(+) binding site.

It belongs to the IMPDH/GMPR family. GuaC type 2 subfamily.

It catalyses the reaction IMP + NH4(+) + NADP(+) = GMP + NADPH + 2 H(+). Functionally, catalyzes the irreversible NADPH-dependent deamination of GMP to IMP. It functions in the conversion of nucleobase, nucleoside and nucleotide derivatives of G to A nucleotides, and in maintaining the intracellular balance of A and G nucleotides. This chain is GMP reductase, found in Staphylococcus aureus (strain NCTC 8325 / PS 47).